The following is a 35-amino-acid chain: Sperm protamine alpha isoform 2 (35 aa).

Residues 1–35 (MPRRRRRASRPIRRRRRARRSTAVRRRRRVVRRRR) form a disordered region. 2 positions are modified to phosphoserine: Ser9 and Ser21.

Phosphorylated in immature sperm. Dephosphorylated in mature sperm allowing a stronger interaction with DNA. As to expression, gonads.

It localises to the nucleus. The protein resides in the chromosome. Its function is as follows. Protamines substitute for histones in the chromatin of sperm during the haploid phase of spermatogenesis. They compact sperm DNA into a highly condensed, stable and inactive complex. This is Sperm protamine alpha isoform 2 from Scomber scombrus (Atlantic mackerel).